The following is a 435-amino-acid chain: Gamma-glutamyl phosphate reductase (435 aa).

Belongs to the gamma-glutamyl phosphate reductase family.

It is found in the cytoplasm. It catalyses the reaction L-glutamate 5-semialdehyde + phosphate + NADP(+) = L-glutamyl 5-phosphate + NADPH + H(+). Its pathway is amino-acid biosynthesis; L-proline biosynthesis; L-glutamate 5-semialdehyde from L-glutamate: step 2/2. Its function is as follows. Catalyzes the NADPH-dependent reduction of L-glutamate 5-phosphate into L-glutamate 5-semialdehyde and phosphate. The product spontaneously undergoes cyclization to form 1-pyrroline-5-carboxylate. This is Gamma-glutamyl phosphate reductase from Bradyrhizobium diazoefficiens (strain JCM 10833 / BCRC 13528 / IAM 13628 / NBRC 14792 / USDA 110).